Reading from the N-terminus, the 191-residue chain is Peptidyl-tRNA hydrolase (191 aa).

Residue Tyr-17 coordinates tRNA. The Proton acceptor role is filled by His-22. Residues Tyr-68, Asn-70, and Asn-116 each coordinate tRNA.

It belongs to the PTH family. In terms of assembly, monomer.

It localises to the cytoplasm. It carries out the reaction an N-acyl-L-alpha-aminoacyl-tRNA + H2O = an N-acyl-L-amino acid + a tRNA + H(+). In terms of biological role, hydrolyzes ribosome-free peptidyl-tRNAs (with 1 or more amino acids incorporated), which drop off the ribosome during protein synthesis, or as a result of ribosome stalling. Catalyzes the release of premature peptidyl moieties from peptidyl-tRNA molecules trapped in stalled 50S ribosomal subunits, and thus maintains levels of free tRNAs and 50S ribosomes. The protein is Peptidyl-tRNA hydrolase of Mycobacterium tuberculosis (strain ATCC 25177 / H37Ra).